The following is a 502-amino-acid chain: Probable cytochrome P450 313b1 (502 aa).

Cys449 provides a ligand contact to heme.

It belongs to the cytochrome P450 family. Heme is required as a cofactor.

It is found in the endoplasmic reticulum membrane. The protein resides in the microsome membrane. Functionally, may be involved in the metabolism of insect hormones and in the breakdown of synthetic insecticides. The chain is Probable cytochrome P450 313b1 (Cyp313b1) from Drosophila melanogaster (Fruit fly).